Reading from the N-terminus, the 409-residue chain is Probable sodium/metabolite cotransporter BASS6, chloroplastic (409 aa).

The N-terminal 49 residues, 1 to 49 (MSVITTPIETLHLKSTLRLLPRAVYRSQRIQVFPPNIFSNTSLSSPLRI), are a transit peptide targeting the chloroplast. The next 9 helical transmembrane spans lie at 100-120 (ILPHVVLASTILALIYPPSFT), 121-141 (WFTSRYFVPALGFLMFAVGIN), 170-190 (VLGFIFGLAAVSLFQLPTPIG), 191-211 (AGIMLVSCVSGAQLSNYATFL), 221-241 (IVMTSLSTATAVLVTPMLSLL), 253-273 (GMISSILQVVIAPIAAGLLLN), 285-305 (PFLPILSVLDTACCVGAPLAL), 316-336 (ATILLLVTMFHLSAFLAGYFL), and 381-401 (IPPAISTVVMSLMGFTLVLIW).

It belongs to the bile acid:sodium symporter (BASS) (TC 2.A.28) family.

It is found in the membrane. Its subcellular location is the plastid. The protein resides in the chloroplast envelope. May function as sodium-coupled metabolite transporter across the chloroplast envelope. The protein is Probable sodium/metabolite cotransporter BASS6, chloroplastic (BASS6) of Arabidopsis thaliana (Mouse-ear cress).